The sequence spans 238 residues: Ureidoacrylate amidohydrolase RutB (238 aa).

The Proton acceptor role is filled by Asp-35. Residue Lys-144 is part of the active site. Cys-177 serves as the catalytic Nucleophile.

The protein belongs to the isochorismatase family. RutB subfamily.

The catalysed reaction is (Z)-3-ureidoacrylate + H2O + H(+) = (Z)-3-aminoacrylate + NH4(+) + CO2. The enzyme catalyses (Z)-3-ureidoacrylate + H2O = (Z)-3-aminoacrylate + carbamate + H(+). It carries out the reaction (Z)-2-methylureidoacrylate + H2O + H(+) = (Z)-2-methylaminoacrylate + NH4(+) + CO2. In terms of biological role, hydrolyzes ureidoacrylate to form aminoacrylate and carbamate. The carbamate hydrolyzes spontaneously, thereby releasing one of the nitrogen atoms of the pyrimidine ring as ammonia and one of its carbon atoms as CO2. In Caulobacter vibrioides (strain NA1000 / CB15N) (Caulobacter crescentus), this protein is Ureidoacrylate amidohydrolase RutB.